The chain runs to 198 residues: RNA-free ribonuclease P (198 aa).

It belongs to the HARP family.

It carries out the reaction Endonucleolytic cleavage of RNA, removing 5'-extranucleotides from tRNA precursor.. Functionally, RNA-free RNase P that catalyzes the removal of the 5'-leader sequence from pre-tRNA to produce the mature 5'-terminus. The polypeptide is RNA-free ribonuclease P (Thermococcus kodakarensis (strain ATCC BAA-918 / JCM 12380 / KOD1) (Pyrococcus kodakaraensis (strain KOD1))).